Here is a 136-residue protein sequence, read N- to C-terminus: Small ribosomal subunit protein bS6 (136 aa).

Residues 99–136 are disordered; the sequence is QSEMLKAEENRSERRERRERPEHGGHEGLDGDSDKADE. Basic and acidic residues predominate over residues 103-136; the sequence is LKAEENRSERRERRERPEHGGHEGLDGDSDKADE.

Belongs to the bacterial ribosomal protein bS6 family.

Functionally, binds together with bS18 to 16S ribosomal RNA. This is Small ribosomal subunit protein bS6 from Azotobacter vinelandii (strain DJ / ATCC BAA-1303).